A 210-amino-acid chain; its full sequence is Glycerol-3-phosphate acyltransferase 2 (210 aa).

6 helical membrane-spanning segments follow: residues 4 to 24, 52 to 72, 73 to 93, 114 to 134, 141 to 161, and 163 to 183; these read LIMV…PAPY, VGFW…ALAM, AVAN…LMAI, IGIL…CFLI, FPTL…WLGQ, and DMGK…MYIP.

The protein belongs to the PlsY family. Probably interacts with PlsX.

Its subcellular location is the cell membrane. It catalyses the reaction an acyl phosphate + sn-glycerol 3-phosphate = a 1-acyl-sn-glycero-3-phosphate + phosphate. Its pathway is lipid metabolism; phospholipid metabolism. In terms of biological role, catalyzes the transfer of an acyl group from acyl-phosphate (acyl-PO(4)) to glycerol-3-phosphate (G3P) to form lysophosphatidic acid (LPA). This enzyme utilizes acyl-phosphate as fatty acyl donor, but not acyl-CoA or acyl-ACP. This chain is Glycerol-3-phosphate acyltransferase 2, found in Dehalococcoides mccartyi (strain CBDB1).